The sequence spans 430 residues: Adenylosuccinate synthetase (430 aa).

GTP is bound by residues 17 to 23 (GDEGKGK) and 45 to 47 (GHT). Aspartate 18 functions as the Proton acceptor in the catalytic mechanism. Positions 18 and 45 each coordinate Mg(2+). IMP contacts are provided by residues 18 to 21 (DEGK), 43 to 46 (NAGH), threonine 139, arginine 153, asparagine 229, threonine 244, and arginine 308. Histidine 46 (proton donor) is an active-site residue. 304 to 310 (TVTGRRR) provides a ligand contact to substrate. Residues arginine 310, 336-338 (KLD), and 418-420 (GVG) each bind GTP.

This sequence belongs to the adenylosuccinate synthetase family. In terms of assembly, homodimer. The cofactor is Mg(2+).

It localises to the cytoplasm. It carries out the reaction IMP + L-aspartate + GTP = N(6)-(1,2-dicarboxyethyl)-AMP + GDP + phosphate + 2 H(+). It functions in the pathway purine metabolism; AMP biosynthesis via de novo pathway; AMP from IMP: step 1/2. Plays an important role in the de novo pathway and in the salvage pathway of purine nucleotide biosynthesis. Catalyzes the first committed step in the biosynthesis of AMP from IMP. The sequence is that of Adenylosuccinate synthetase from Cryptococcus neoformans var. neoformans serotype D (strain B-3501A) (Filobasidiella neoformans).